The primary structure comprises 460 residues: MLTIYNTLSKTKETFKPLDGNNVRMYVCGMTVYDYCHLGHGRSMVAFDLITRWLRKSGYALTYVRNITDIDDKIINRANENGESFDALTARMIDAMHEDERRLSILKPDLEPRATDHIPGMHAMIQTLIDKGYAYAPGNGDVYYRVGKFAGYGKLSRKKIEDLRIGARIEVGESKQDPLDFVLWKGAKPGEPFWDSPWGPGRPGWHIECSVMSTCCLGESFDIHGGGSDLEFPHHENEIAQSEAATGKPYANAWMHCGMIRINGEKMSKSLNNFFTIRDVLDKYHPEVVRYLLVASHYRSAINYSEDSLRDSKGALERFYHALRGLPRVAAKGGEAFVERFTVAMNDDFGTPEACAVLFDLVREINRLRESDVEAAAGLAGRLRELGDVLGVLQLDADEFLRAGAEGKVDAAQVEALIQARLQARADKNWAESDRIRDQITAMGVVLEDGKGGTTWRLAD.

Residue C28 participates in Zn(2+) binding. A 'HIGH' region motif is present at residues M30–H40. Zn(2+) is bound by residues C209, H234, and E238. The short motif at K266–S270 is the 'KMSKS' region element. K269 contacts ATP.

This sequence belongs to the class-I aminoacyl-tRNA synthetase family. In terms of assembly, monomer. Zn(2+) serves as cofactor.

Its subcellular location is the cytoplasm. The catalysed reaction is tRNA(Cys) + L-cysteine + ATP = L-cysteinyl-tRNA(Cys) + AMP + diphosphate. The protein is Cysteine--tRNA ligase of Pseudomonas entomophila (strain L48).